A 640-amino-acid polypeptide reads, in one-letter code: Asparagine synthetase domain-containing protein 1 (640 aa).

The For GATase activity role is filled by C2. Positions 2–184 (CGICCAVSFS…ASGIFRIDLK (183 aa)) constitute a Glutamine amidotransferase type-2 domain. In terms of domain architecture, Asparagine synthetase spans 286 to 602 (QFIGVLSTAV…GLTASALLPK (317 aa)).

This chain is Asparagine synthetase domain-containing protein 1 (ASNSD1), found in Bos taurus (Bovine).